Here is a 102-residue protein sequence, read N- to C-terminus: Redox- and pH-responsive transcriptional regulator WhiB3 (102 aa).

The region spanning 22-86 (LCRGMDSSMF…GGLSESERDL (65 aa)) is the 4Fe-4S Wbl-type domain. Cysteine 23, cysteine 53, cysteine 56, and cysteine 62 together coordinate [4Fe-4S] cluster.

The protein belongs to the WhiB family. As to quaternary structure, homodimer. Interacts with the C-terminal 54 residues of sigma factor SigA (RpoV). It depends on [4Fe-4S] cluster as a cofactor. In terms of processing, the 4Fe-4S cluster interacts with NO, forming a protein-bound dinitrosyliron dithiol complex. Post-translationally, the 4Fe-4S cluster interacts with O(2), leading to its degradation. Cluster loss takes about 2 hours. Once in the apo-form the cysteines oxidize to form 2 intramolecular disulfide bonds.

The protein localises to the cytoplasm. Functionally, a redox-sensitive transcriptional regulator. Maintains intracellular redox homeostasis by regulating catabolic metabolism and polyketide biosynthesis. Regulates expression of the redox buffer ergothioneine (ERG) in a carbon-source-dependent manner; loss of ERG or mycothiol (MSH, the other major redox buffer in this bacteria) leads to respiratory alterations and bioenergetic deficiencies that negatively impact virulence. In response to low external pH (like that found in host macrophage phagosomes) alters endogenous gene expression leading to acid resistance; MSH and WhiB3 are probably part of a regulatory circuit that mediates gene expression upon acid stress. Regulates pathogenic lipid synthesis, coordinating proprionate flux (and other host-derived fatty acid oxidation intermediates) into methyl-branched fatty acids (polyacyltrehalose, phthiocerol dimycocerosates, sulfolipids) and the storage lipid triacylglycerol, functioning as reductive sink. During intracellular growth M.tuberculosis uses host fatty acids as an energy source, generating large quantities of proprionate and NADH/NADPH, which are toxic and highly reducing respectively. WhiB3 is thought to help dissipate proprionate and NADH/NADPH by switching to the in vivo carbon source and via lipid anabolism. Responds to NO and O(2). Regulates expression of genes encoding modular polyketide synthases such as pks2, pks3 and fbpA. The oxidized apo-form of WhiB3 binds DNA (with 2 intramolecular disulfide bonds); holo-WhiB3 (with the 4Fe-4S cluster) binds DNA considerably less well. Discriminates poorly between specific and non-specific DNA-binding. Plays a role in virulence and nutritional stress. In its apo-form can act as a protein disulfide reductase. In terms of biological role, may respond to mycothiol (MSH) redox potential (E-MSH) which decreases at pH 4.5 for up to 72 hours, indicative of cellular reductive stress; deletion of whiB3 leads to a lesser E-MSH at 72 hours, indicative of cellular oxidative stress. Probably via its effects on production of polyketide lipids, regulates host gene expression, leading to blockage of phagosome maturation. Equilibration of extra- and intracytoplasmic pH kills bacteria. The sequence is that of Redox- and pH-responsive transcriptional regulator WhiB3 (whiB3) from Mycobacterium tuberculosis (strain ATCC 25618 / H37Rv).